We begin with the raw amino-acid sequence, 165 residues long: Small ribosomal subunit protein uS5 (165 aa).

The region spanning 10–73 (LKEKVVFINR…EDAKKHLVEV (64 aa)) is the S5 DRBM domain.

It belongs to the universal ribosomal protein uS5 family. As to quaternary structure, part of the 30S ribosomal subunit. Contacts proteins S4 and S8.

Functionally, with S4 and S12 plays an important role in translational accuracy. Its function is as follows. Located at the back of the 30S subunit body where it stabilizes the conformation of the head with respect to the body. This Clostridium novyi (strain NT) protein is Small ribosomal subunit protein uS5.